The following is a 261-amino-acid chain: 3-deoxy-manno-octulosonate cytidylyltransferase 1 (261 aa).

The protein belongs to the KdsB family.

It localises to the cytoplasm. The enzyme catalyses 3-deoxy-alpha-D-manno-oct-2-ulosonate + CTP = CMP-3-deoxy-beta-D-manno-octulosonate + diphosphate. It functions in the pathway nucleotide-sugar biosynthesis; CMP-3-deoxy-D-manno-octulosonate biosynthesis; CMP-3-deoxy-D-manno-octulosonate from 3-deoxy-D-manno-octulosonate and CTP: step 1/1. Its pathway is bacterial outer membrane biogenesis; lipopolysaccharide biosynthesis. Functionally, activates KDO (a required 8-carbon sugar) for incorporation into bacterial lipopolysaccharide in Gram-negative bacteria. The chain is 3-deoxy-manno-octulosonate cytidylyltransferase 1 from Burkholderia lata (strain ATCC 17760 / DSM 23089 / LMG 22485 / NCIMB 9086 / R18194 / 383).